Consider the following 97-residue polypeptide: SAGA-associated factor 11 (97 aa).

Residues 70 to 91 (IECNVCGREVSGNRFAAHLVRC) form an SGF11-type zinc finger.

The protein belongs to the SGF11 family. As to quaternary structure, component of the 1.8 MDa SAGA transcription coactivator-HAT complex. SAGA is built of 5 distinct domains with specialized functions. Within the SAGA complex, SUS1, SGF11, SGF73 and UBP8 form an additional subcomplex of SAGA called the DUB module (deubiquitination module). Interacts directly with SGF73, SUS1 and UBP8.

It localises to the nucleus. Functions as a component of the transcription regulatory histone acetylation (HAT) complex SAGA. At the promoters, SAGA is required for recruitment of the basal transcription machinery. It influences RNA polymerase II transcriptional activity through different activities such as TBP interaction and promoter selectivity, interaction with transcription activators, and chromatin modification through histone acetylation and deubiquitination. SAGA acetylates nucleosomal histone H3 to some extent (to form H3K9ac, H3K14ac, H3K18ac and H3K23ac). SAGA interacts with DNA via upstream activating sequences (UASs). Involved in transcriptional regulation of a subset of SAGA-regulated genes. Within the SAGA complex, participates in a subcomplex, that specifically deubiquitinates histones H2B. This chain is SAGA-associated factor 11, found in Kluyveromyces lactis (strain ATCC 8585 / CBS 2359 / DSM 70799 / NBRC 1267 / NRRL Y-1140 / WM37) (Yeast).